Here is a 283-residue protein sequence, read N- to C-terminus: Release factor glutamine methyltransferase (283 aa).

Residues 121-125 (GTGSG), aspartate 144, and asparagine 188 each bind S-adenosyl-L-methionine. Position 188–191 (188–191 (NPPY)) interacts with substrate.

This sequence belongs to the protein N5-glutamine methyltransferase family. PrmC subfamily.

It carries out the reaction L-glutaminyl-[peptide chain release factor] + S-adenosyl-L-methionine = N(5)-methyl-L-glutaminyl-[peptide chain release factor] + S-adenosyl-L-homocysteine + H(+). In terms of biological role, methylates the class 1 translation termination release factors RF1/PrfA and RF2/PrfB on the glutamine residue of the universally conserved GGQ motif. This Bacillus anthracis protein is Release factor glutamine methyltransferase.